A 246-amino-acid polypeptide reads, in one-letter code: MSKRITRVLFKISGESLSTDSGNRIDEVRLSRLVAELRAVRNCDIETALVIGGGNILRGLAQQKELQINRVSADQMGMLATLINGMAVADALKADDIPCLLTSTLSCPQLADLYTPQKSEEALNQGKIVICTTGTGSPYLTTDTGAALRACELKVDILLKATMHVDGVYNKDPRSFSDAVKYDRISFKDFLAQGLGVMDASAVSLCMDSNIPIRVFSFVKHSLEQAIFDENIGTLIGEEATHVHSS.

11–14 (KISG) serves as a coordination point for ATP. UMP is bound at residue Gly-53. ATP contacts are provided by Gly-54 and Arg-58. Residues Asp-74 and 135–142 (TGSPYLTT) contribute to the UMP site. Residues Thr-162, Tyr-169, and Asp-172 each coordinate ATP.

Belongs to the UMP kinase family. Homohexamer.

It is found in the cytoplasm. It carries out the reaction UMP + ATP = UDP + ADP. Its pathway is pyrimidine metabolism; CTP biosynthesis via de novo pathway; UDP from UMP (UMPK route): step 1/1. Its activity is regulated as follows. Inhibited by UTP. Its function is as follows. Catalyzes the reversible phosphorylation of UMP to UDP. The sequence is that of Uridylate kinase from Chlamydia abortus (strain DSM 27085 / S26/3) (Chlamydophila abortus).